A 333-amino-acid polypeptide reads, in one-letter code: 4-hydroxyproline epimerase (333 aa).

Cysteine 90 acts as the Proton acceptor in catalysis. Substrate-binding positions include 91 to 92 (GH) and aspartate 249. Catalysis depends on cysteine 253, which acts as the Proton donor. 254–255 (GT) contacts substrate.

It belongs to the proline racemase family. In terms of assembly, homodimer.

It catalyses the reaction trans-4-hydroxy-L-proline = cis-4-hydroxy-D-proline. Functionally, allows intracellular utilization of 4-hydroxyproline, one of the major constituents of host collagen, by converting 4-hydroxy-L-proline to 4-hydroxy-D-proline, which can be further metabolized by intracellular 4-hydroxy-D-proline oxidases. Strong B-cell mitogen. Plays an important role in the regulation of intra- and extracellular amino acid pools, allowing the bacterium to profit from host precursors and enzymatic pathways. The chain is 4-hydroxyproline epimerase from Brucella canis (strain ATCC 23365 / NCTC 10854 / RM-666).